Reading from the N-terminus, the 264-residue chain is Apolipoprotein A-I (264 aa).

Positions 1 to 18 are cleaved as a signal peptide; it reads MKAVVLTVAVLFLTGSQA. 2 tandem repeats follow at residues 67 to 88 and 89 to 110. Positions 67–264 are 10 X approximate tandem repeats; that stretch reads LKLLDNWDTL…DDAAKKLSSQ (198 aa). M109 bears the Methionine sulfoxide mark. Residues 111 to 121 form a 3; half-length repeat; that stretch reads KDLEEVKQKVQ. 3 consecutive repeat copies span residues 122–143, 144–165, and 166–187. The stretch at 188–207 is one 7; truncated repeat; the sequence is PYSDKMRERLAERLTALKDS. At M193 the chain carries Methionine sulfoxide. Repeat 8 spans residues 208 to 229; it reads ASFAEYHAKASEHLKTLREKAK. The stretch at 230-240 is one 9; half-length repeat; sequence PAIEDLGQGLL. Repeat 10 spans residues 241-264; the sequence is PVLENLKASFLSAIDDAAKKLSSQ.

Belongs to the apolipoprotein A1/A4/E family. In terms of assembly, homodimer. Interacts with APOA1BP and CLU. Component of a sperm activating protein complex (SPAP), consisting of APOA1, an immunoglobulin heavy chain, an immunoglobulin light chain and albumin. Interacts with NDRG1. Interacts with SCGB3A2. Interacts with NAXE and YJEFN3. Glycosylated. In terms of processing, palmitoylated. Post-translationally, phosphorylation sites are present in the extracellular medium.

Its subcellular location is the secreted. In terms of biological role, participates in the reverse transport of cholesterol from tissues to the liver for excretion by promoting cholesterol efflux from tissues and by acting as a cofactor for the lecithin cholesterol acyltransferase (LCAT). As part of the SPAP complex, activates spermatozoa motility. The protein is Apolipoprotein A-I (APOA1) of Castor canadensis (American beaver).